The chain runs to 72 residues: Small ribosomal subunit protein bS18 (72 aa).

This sequence belongs to the bacterial ribosomal protein bS18 family. Part of the 30S ribosomal subunit. Forms a tight heterodimer with protein bS6.

In terms of biological role, binds as a heterodimer with protein bS6 to the central domain of the 16S rRNA, where it helps stabilize the platform of the 30S subunit. In Francisella tularensis subsp. holarctica (strain FTNF002-00 / FTA), this protein is Small ribosomal subunit protein bS18.